Reading from the N-terminus, the 247-residue chain is Putative methyltransferase GWCH70_2453 (247 aa).

It belongs to the methyltransferase superfamily.

Its function is as follows. May be a S-adenosyl-L-methionine (SAM)-dependent methyltransferase. This Geobacillus sp. (strain WCH70) protein is Putative methyltransferase GWCH70_2453.